The following is a 391-amino-acid chain: MGYFVPDSHIENLKSYKYQSEDRSLVSKYFLKPFWQRFCHIFPTWMAPNIITLSGFAFIVINVLTVFYYDPNLNTDTPRWTYFSYALGVFLYQTFDGCDGVHARRINQSGPLGELFDHSIDAINSTLSIFIFASETGMGFSYNLMLSQFAMLTNFYLSTWEEYHTHTLYLSEFSGPVEGILIVCVSLILTGIYGKQVIWHTYLFTITVGDKVIDVDTLDIVFSLAVFGLVMNALSAKRNVDKYYRNSTSSANNITQIEQDSAIKGLLPFFAYYASIALLVWMQPSFITLSFILSVGFTGAFTVGRIIVCHLTKQSFPMFNAPMLIPLCQIVLYKICLSLWGIESNKIVFALSWLGFGLSLGVHIMFMNDIIHEFTEYLDVYALSIKRSKLT.

At 1-49 (MGYFVPDSHIENLKSYKYQSEDRSLVSKYFLKPFWQRFCHIFPTWMAPN) the chain is on the lumenal side. Residues 50 to 69 (IITLSGFAFIVINVLTVFYY) traverse the membrane as a helical segment. Residues 70 to 172 (DPNLNTDTPR…YHTHTLYLSE (103 aa)) lie on the Cytoplasmic side of the membrane. A helical membrane pass occupies residues 173-193 (FSGPVEGILIVCVSLILTGIY). Residues 194-211 (GKQVIWHTYLFTITVGDK) lie on the Lumenal side of the membrane. A helical transmembrane segment spans residues 212 to 232 (VIDVDTLDIVFSLAVFGLVMN). Residues 233 to 264 (ALSAKRNVDKYYRNSTSSANNITQIEQDSAIK) are Cytoplasmic-facing. A helical membrane pass occupies residues 265–282 (GLLPFFAYYASIALLVWM). Topologically, residues 283-285 (QPS) are lumenal. Residues 286–308 (FITLSFILSVGFTGAFTVGRIIV) form a helical membrane-spanning segment. The Cytoplasmic portion of the chain corresponds to 309-321 (CHLTKQSFPMFNA). The helical transmembrane segment at 322–342 (PMLIPLCQIVLYKICLSLWGI) threads the bilayer. Topologically, residues 343–346 (ESNK) are lumenal. Residues 347–367 (IVFALSWLGFGLSLGVHIMFM) form a helical membrane-spanning segment. Over 368-391 (NDIIHEFTEYLDVYALSIKRSKLT) the chain is Cytoplasmic.

The protein belongs to the CDP-alcohol phosphatidyltransferase class-I family. Requires Mg(2+) as cofactor.

It is found in the golgi apparatus membrane. The catalysed reaction is CDP-ethanolamine + a 1,2-diacyl-sn-glycerol = a 1,2-diacyl-sn-glycero-3-phosphoethanolamine + CMP + H(+). It carries out the reaction CDP-choline + a 1,2-diacyl-sn-glycerol = a 1,2-diacyl-sn-glycero-3-phosphocholine + CMP + H(+). The enzyme catalyses CDP-N-methylethanolamine + a 1,2-diacyl-sn-glycerol = a 1,2-diacyl-sn-glycero-3-phospho-N-methylethanolamine + CMP + H(+). It catalyses the reaction CDP-N,N-dimethylethanolamine + a 1,2-diacyl-sn-glycerol = a 1,2-diacyl-sn-glycero-3-phospho-N,N-dimethylethanolamine + CMP + H(+). The catalysed reaction is 1,2-di-(9Z-octadecenoyl)-glycerol + CDP-choline = 1,2-di-(9Z-octadecenoyl)-sn-glycero-3-phosphocholine + CMP + H(+). It carries out the reaction 1,2-di-(9Z-octadecenoyl)-glycerol + CDP-ethanolamine = 1,2-di-(9Z-octadecenoyl)-sn-glycero-3-phosphoethanolamine + CMP + H(+). It functions in the pathway phospholipid metabolism; phosphatidylethanolamine biosynthesis; phosphatidylethanolamine from ethanolamine: step 3/3. The protein operates within phospholipid metabolism; phosphatidylcholine biosynthesis; phosphatidylcholine from phosphocholine: step 2/2. Requires a divalent cation activator, and is inhibited by CMP. Activated by phospholipids, especially phosphatidylcholine. Catalyzes the final step in the CDP-ethanolamine route leading to phosphatidylethanolamine (PE). Can also catalyze the formation of phosphatidylcholine (PC) from CDP-choline, but does not substantially contribute to PC biosynthesis. Preferentially uses CDP-dimethylethanolamine and CDP-propanolamine as aminoalcohol substrates. Shows highest activity toward di-unsaturated diacylglycerol species as lipid substrates. The CDP-ethanolamine pathway may play a role in maintaining the proper PE species distribution. The polypeptide is Choline/ethanolaminephosphotransferase 1 (EPT1) (Saccharomyces cerevisiae (strain ATCC 204508 / S288c) (Baker's yeast)).